The following is a 462-amino-acid chain: UDP-N-acetylmuramoylalanine--D-glutamate ligase (462 aa).

Position 109-115 (109-115) interacts with ATP; the sequence is GTDGKST.

The protein belongs to the MurCDEF family.

Its subcellular location is the cytoplasm. The catalysed reaction is UDP-N-acetyl-alpha-D-muramoyl-L-alanine + D-glutamate + ATP = UDP-N-acetyl-alpha-D-muramoyl-L-alanyl-D-glutamate + ADP + phosphate + H(+). Its pathway is cell wall biogenesis; peptidoglycan biosynthesis. Cell wall formation. Catalyzes the addition of glutamate to the nucleotide precursor UDP-N-acetylmuramoyl-L-alanine (UMA). The sequence is that of UDP-N-acetylmuramoylalanine--D-glutamate ligase from Leptospira borgpetersenii serovar Hardjo-bovis (strain JB197).